The sequence spans 399 residues: MKILVINCGSSSLKYQLLDMDTQTPIAKGLVERIGLPGAVLTHRPADGEKEIITAEIPNHTVAIQLVLDALVNPEYGVVKSLEEIGSVGHRVVHGGEKFASSVLITDEVMQAIEECIELAPLHNPPNIAGIEACQKLMPGVPQVAVFDTAFHQTMPPHAYLYGLPYEFYEKYKIRKYGFHGTSHKYVSQRAAKLLNRPAEGLKLISCHLGNGSSITAIKDGKSIETSMGFTPLEGLMMGTRSGDLDPAIVSFIQQKENLSSDEVNDFLNKKCGVLGLSGVSSDFRDIEQARDQGNYRAALALDVFSHDVKKYIGSYAAVLNGADAIIFTAGLGENSAEMREAVVDGLQYLGAKLDLEKNKVRGKEADISAPEATCRVLVIPTNEELMIALDTLDIIQKG.

Asparagine 7 contributes to the Mg(2+) binding site. Lysine 14 is a binding site for ATP. Substrate is bound at residue arginine 91. Residue aspartate 148 is the Proton donor/acceptor of the active site. ATP contacts are provided by residues 208-212 (HLGNG), 283-285 (DFR), and 331-335 (GLGEN). Glutamate 384 contributes to the Mg(2+) binding site.

The protein belongs to the acetokinase family. In terms of assembly, homodimer. Mg(2+) is required as a cofactor. Requires Mn(2+) as cofactor.

The protein resides in the cytoplasm. The enzyme catalyses acetate + ATP = acetyl phosphate + ADP. Its pathway is metabolic intermediate biosynthesis; acetyl-CoA biosynthesis; acetyl-CoA from acetate: step 1/2. Its function is as follows. Catalyzes the formation of acetyl phosphate from acetate and ATP. Can also catalyze the reverse reaction. This chain is Acetate kinase, found in Desulfitobacterium hafniense (strain DSM 10664 / DCB-2).